The sequence spans 164 residues: UPF0114 protein YqhA (164 aa).

3 helical membrane passes run 10–32 (YASR…ALAL), 53–75 (LILV…MVMF), and 136–155 (LMWY…VMGY).

Belongs to the UPF0114 family.

The protein resides in the cell membrane. This Shigella flexneri protein is UPF0114 protein YqhA.